The sequence spans 229 residues: uncharacterized protein (229 aa).

22 to 29 (GMIAFGKT) is a binding site for ATP.

This is an uncharacterized protein from Mycoplasma pneumoniae (strain ATCC 29342 / M129 / Subtype 1) (Mycoplasmoides pneumoniae).